The following is a 120-amino-acid chain: Ribosome-binding factor A (120 aa).

Belongs to the RbfA family. Monomer. Binds 30S ribosomal subunits, but not 50S ribosomal subunits or 70S ribosomes.

Its subcellular location is the cytoplasm. One of several proteins that assist in the late maturation steps of the functional core of the 30S ribosomal subunit. Associates with free 30S ribosomal subunits (but not with 30S subunits that are part of 70S ribosomes or polysomes). Required for efficient processing of 16S rRNA. May interact with the 5'-terminal helix region of 16S rRNA. This Chlamydia caviae (strain ATCC VR-813 / DSM 19441 / 03DC25 / GPIC) (Chlamydophila caviae) protein is Ribosome-binding factor A.